An 88-amino-acid chain; its full sequence is U-scoloptoxin(XY)-Er1a (88 aa).

The signal sequence occupies residues Met1–Ser24. Residues Arg66 to Ala88 form a disordered region. Residues Glu79–Ala88 constitute a propeptide that is removed on maturation.

This sequence belongs to the scoloptoxin-XY family. In terms of processing, contains 3 disulfide bonds. Expressed by the venom gland.

Its subcellular location is the secreted. The protein is U-scoloptoxin(XY)-Er1a of Ethmostigmus rubripes (Giant centipede).